The primary structure comprises 129 residues: uncharacterized protein (129 aa).

A helical transmembrane segment spans residues 5-25 (IIGLTLAFFVLFLTAVAILFT).

The protein localises to the membrane. This is an uncharacterized protein from Mycoplasma pneumoniae (strain ATCC 29342 / M129 / Subtype 1) (Mycoplasmoides pneumoniae).